A 1022-amino-acid chain; its full sequence is Protein translocase subunit SecA (1022 aa).

ATP is bound by residues Gln-143, 161–165 (GEGKT), and Asp-661. The interval 973–1001 (AGSILSHESDVPSGTAAQQPIKADVKPGR) is disordered. Cys-1005, Cys-1007, Cys-1016, and His-1017 together coordinate Zn(2+).

The protein belongs to the SecA family. As to quaternary structure, monomer and homodimer. Part of the essential Sec protein translocation apparatus which comprises SecA, SecYEG and auxiliary proteins SecDF. Other proteins may also be involved. The cofactor is Zn(2+).

It is found in the cell inner membrane. The protein resides in the cytoplasm. It carries out the reaction ATP + H2O + cellular proteinSide 1 = ADP + phosphate + cellular proteinSide 2.. In terms of biological role, part of the Sec protein translocase complex. Interacts with the SecYEG preprotein conducting channel. Has a central role in coupling the hydrolysis of ATP to the transfer of proteins into and across the cell membrane, serving as an ATP-driven molecular motor driving the stepwise translocation of polypeptide chains across the membrane. In Chlorobium phaeobacteroides (strain DSM 266 / SMG 266 / 2430), this protein is Protein translocase subunit SecA.